The sequence spans 191 residues: Large ribosomal subunit protein uL5 (191 aa).

The protein belongs to the universal ribosomal protein uL5 family. In terms of assembly, part of the 50S ribosomal subunit; part of the 5S rRNA/L5/L18/L25 subcomplex. Contacts the 5S rRNA and the P site tRNA. Forms a bridge to the 30S subunit in the 70S ribosome.

In terms of biological role, this is one of the proteins that bind and probably mediate the attachment of the 5S RNA into the large ribosomal subunit, where it forms part of the central protuberance. In the 70S ribosome it contacts protein S13 of the 30S subunit (bridge B1b), connecting the 2 subunits; this bridge is implicated in subunit movement. Contacts the P site tRNA; the 5S rRNA and some of its associated proteins might help stabilize positioning of ribosome-bound tRNAs. The sequence is that of Large ribosomal subunit protein uL5 from Thermobifida fusca (strain YX).